A 129-amino-acid polypeptide reads, in one-letter code: Large ribosomal subunit protein bL17 (129 aa).

This sequence belongs to the bacterial ribosomal protein bL17 family. In terms of assembly, part of the 50S ribosomal subunit. Contacts protein L32.

In Pasteurella multocida (strain Pm70), this protein is Large ribosomal subunit protein bL17.